The primary structure comprises 400 residues: Lysophospholipid transporter LplT (400 aa).

12 helical membrane-spanning segments follow: residues 19–39 (VIVA…ATLA), 53–73 (VLQM…GQIA), 91–111 (AGAA…LVGI), 139–159 (LMEA…GVLA), 164–184 (IAAL…NLFI), 195–213 (SWRL…VVLW), 227–247 (LFWG…PVAL), 257–277 (YLNA…AKLV), 281–301 (TVSR…IFSL), 304–324 (ALLP…FFVV), 352–372 (NSAM…GVPA), and 373–393 (VAIG…LWIW).

Belongs to the major facilitator superfamily. LplT (TC 2.A.1.42) family.

It is found in the cell inner membrane. Its function is as follows. Catalyzes the facilitated diffusion of 2-acyl-glycero-3-phosphoethanolamine (2-acyl-GPE) into the cell. This chain is Lysophospholipid transporter LplT, found in Salmonella schwarzengrund (strain CVM19633).